Reading from the N-terminus, the 335-residue chain is MQNILNKIYQSQHLNKEESYRLFKSISSGSITDITLSSILTAMKIRGESKEEIIGAILAFSECVKYFPKPNYVFLDIVGTGGDIKNTINISTASAFVAASCGLKIVKHCNQGVSSTSGSADLLKRFHINLHASSKEHRKTLDKLNICFLFAPKYHDSFKYSNNVRKILKTRTIFNLLGPFLNPAIPPLALIGVYKKDLLYSSIEILKSLKYQRAIVLHGDGTDEVTLHNTTHVAELFNGKIFSYELHPKDFGLKIHDKKIFTKTSLEENYYIINQIMKGKGDKLNEELIAANVAILFKIFGYEDLKSNTKLALNKIRSGDVYKHIINVANMLKED.

5-phospho-alpha-D-ribose 1-diphosphate contacts are provided by residues glycine 79, 82–83 (GD), threonine 87, 89–92 (NIST), 107–115 (KHCNQGVSS), and serine 119. Residue glycine 79 coordinates anthranilate. Serine 91 provides a ligand contact to Mg(2+). Position 110 (asparagine 110) interacts with anthranilate. Arginine 165 contacts anthranilate. Mg(2+) contacts are provided by aspartate 223 and glutamate 224.

Belongs to the anthranilate phosphoribosyltransferase family. As to quaternary structure, homodimer. The cofactor is Mg(2+).

It catalyses the reaction N-(5-phospho-beta-D-ribosyl)anthranilate + diphosphate = 5-phospho-alpha-D-ribose 1-diphosphate + anthranilate. Its pathway is amino-acid biosynthesis; L-tryptophan biosynthesis; L-tryptophan from chorismate: step 2/5. Catalyzes the transfer of the phosphoribosyl group of 5-phosphorylribose-1-pyrophosphate (PRPP) to anthranilate to yield N-(5'-phosphoribosyl)-anthranilate (PRA). This is Anthranilate phosphoribosyltransferase from Buchnera aphidicola subsp. Diuraphis noxia.